The primary structure comprises 160 residues: Small ribosomal subunit protein uS7 (160 aa).

It belongs to the universal ribosomal protein uS7 family. In terms of assembly, part of the 30S ribosomal subunit. Contacts proteins S9 and S11.

Functionally, one of the primary rRNA binding proteins, it binds directly to 16S rRNA where it nucleates assembly of the head domain of the 30S subunit. Is located at the subunit interface close to the decoding center, probably blocks exit of the E-site tRNA. This chain is Small ribosomal subunit protein uS7, found in Hydrogenobaculum sp. (strain Y04AAS1).